The chain runs to 97 residues: YcgL domain-containing protein CPS_3517 (97 aa).

The 85-residue stretch at 1 to 85 folds into the YcgL domain; sequence MLCAIYKSAR…PQEDLLKEHK (85 aa).

This is YcgL domain-containing protein CPS_3517 from Colwellia psychrerythraea (strain 34H / ATCC BAA-681) (Vibrio psychroerythus).